Here is a 78-residue protein sequence, read N- to C-terminus: DNA-directed RNA polymerase subunit Rpo5 (78 aa).

Belongs to the archaeal Rpo5/eukaryotic RPB5 RNA polymerase subunit family. As to quaternary structure, part of the RNA polymerase complex.

The protein localises to the cytoplasm. The enzyme catalyses RNA(n) + a ribonucleoside 5'-triphosphate = RNA(n+1) + diphosphate. In terms of biological role, DNA-dependent RNA polymerase (RNAP) catalyzes the transcription of DNA into RNA using the four ribonucleoside triphosphates as substrates. This is DNA-directed RNA polymerase subunit Rpo5 from Methanococcus vannielii (strain ATCC 35089 / DSM 1224 / JCM 13029 / OCM 148 / SB).